The sequence spans 61 residues: Photosystem II reaction center protein K (61 aa).

A propeptide spanning residues 1–24 (MLNTFSLIGICLNSTLYSSSFFFG) is cleaved from the precursor. Residues 36–56 (IVDIMPVIPLFFFLLAFVWQA) form a helical membrane-spanning segment.

Belongs to the PsbK family. PSII is composed of 1 copy each of membrane proteins PsbA, PsbB, PsbC, PsbD, PsbE, PsbF, PsbH, PsbI, PsbJ, PsbK, PsbL, PsbM, PsbT, PsbX, PsbY, PsbZ, Psb30/Ycf12, at least 3 peripheral proteins of the oxygen-evolving complex and a large number of cofactors. It forms dimeric complexes.

It is found in the plastid. Its subcellular location is the chloroplast thylakoid membrane. In terms of biological role, one of the components of the core complex of photosystem II (PSII). PSII is a light-driven water:plastoquinone oxidoreductase that uses light energy to abstract electrons from H(2)O, generating O(2) and a proton gradient subsequently used for ATP formation. It consists of a core antenna complex that captures photons, and an electron transfer chain that converts photonic excitation into a charge separation. This Solanum bulbocastanum (Wild potato) protein is Photosystem II reaction center protein K.